Reading from the N-terminus, the 100-residue chain is Large ribosomal subunit protein bL21 (100 aa).

This sequence belongs to the bacterial ribosomal protein bL21 family. In terms of assembly, part of the 50S ribosomal subunit. Contacts protein L20.

Its function is as follows. This protein binds to 23S rRNA in the presence of protein L20. This chain is Large ribosomal subunit protein bL21, found in Wolbachia sp. subsp. Brugia malayi (strain TRS).